A 111-amino-acid chain; its full sequence is Microtubule nucleation factor SSNA1 (111 aa).

Positions 6–71 form a coiled coil; it reads QALQNHNNEL…ARKTETKNEY (66 aa).

The protein belongs to the SSNA1 family. Self-assembles into fibrils in a head-to-tail fashion.

The protein resides in the cytoplasm. It localises to the cytoskeleton. Its subcellular location is the flagellum basal body. The protein localises to the flagellum axoneme. Microtubule-binding protein which stabilizes dynamic microtubules by slowing growth and shrinkage at both plus and minus ends and serves as a sensor of microtubule damage. Induces microtubule branching which is mediated by the formation of long SSNA1 fibrils which guide microtubule protofilaments to split apart from the mother microtubule and form daughter microtubules. Required for cell division. This is Microtubule nucleation factor SSNA1 from Chlamydomonas reinhardtii (Chlamydomonas smithii).